The sequence spans 353 residues: Photosystem II protein D1 (353 aa).

An N-acetylthreonine modification is found at Thr2. The residue at position 2 (Thr2) is a Phosphothreonine. The next 3 membrane-spanning stretches (helical) occupy residues 29–46 (YIGWFGVLMIPTLLTATS), 118–133 (HFLLGVACYMGREWEL), and 142–156 (WIAVAYSAPVAAATA). His118 is a binding site for chlorophyll a. Tyr126 is a pheophytin a binding site. 2 residues coordinate [CaMn4O5] cluster: Asp170 and Glu189. A helical membrane pass occupies residues 197-218 (FHMLGVAGVFGGSLFSAMHGSL). Position 198 (His198) interacts with chlorophyll a. A quinone-binding positions include His215 and 264-265 (SF). His215 contributes to the Fe cation binding site. Fe cation is bound at residue His272. A helical membrane pass occupies residues 274-288 (FLAAWPVVGIWFTAL). [CaMn4O5] cluster contacts are provided by His332, Glu333, Asp342, and Ala344. The propeptide occupies 345-353 (AIEAPSTNG).

This sequence belongs to the reaction center PufL/M/PsbA/D family. In terms of assembly, PSII is composed of 1 copy each of membrane proteins PsbA, PsbB, PsbC, PsbD, PsbE, PsbF, PsbH, PsbI, PsbJ, PsbK, PsbL, PsbM, PsbT, PsbX, PsbY, PsbZ, Psb30/Ycf12, at least 3 peripheral proteins of the oxygen-evolving complex and a large number of cofactors. It forms dimeric complexes. Requires The D1/D2 heterodimer binds P680, chlorophylls that are the primary electron donor of PSII, and subsequent electron acceptors. It shares a non-heme iron and each subunit binds pheophytin, quinone, additional chlorophylls, carotenoids and lipids. D1 provides most of the ligands for the Mn4-Ca-O5 cluster of the oxygen-evolving complex (OEC). There is also a Cl(-1) ion associated with D1 and D2, which is required for oxygen evolution. The PSII complex binds additional chlorophylls, carotenoids and specific lipids. as cofactor. In terms of processing, tyr-161 forms a radical intermediate that is referred to as redox-active TyrZ, YZ or Y-Z. Post-translationally, C-terminally processed by CTPA; processing is essential to allow assembly of the oxygen-evolving complex and thus photosynthetic growth.

Its subcellular location is the plastid. It is found in the chloroplast thylakoid membrane. It catalyses the reaction 2 a plastoquinone + 4 hnu + 2 H2O = 2 a plastoquinol + O2. Photosystem II (PSII) is a light-driven water:plastoquinone oxidoreductase that uses light energy to abstract electrons from H(2)O, generating O(2) and a proton gradient subsequently used for ATP formation. It consists of a core antenna complex that captures photons, and an electron transfer chain that converts photonic excitation into a charge separation. The D1/D2 (PsbA/PsbD) reaction center heterodimer binds P680, the primary electron donor of PSII as well as several subsequent electron acceptors. This chain is Photosystem II protein D1, found in Gossypium barbadense (Sea Island cotton).